Here is a 444-residue protein sequence, read N- to C-terminus: Tol-Pal system protein TolB (444 aa).

The signal sequence occupies residues 1–19 (MRNIIYFILSLLFSFASYA).

This sequence belongs to the TolB family. The Tol-Pal system is composed of five core proteins: the inner membrane proteins TolA, TolQ and TolR, the periplasmic protein TolB and the outer membrane protein Pal. They form a network linking the inner and outer membranes and the peptidoglycan layer.

The protein localises to the periplasm. In terms of biological role, part of the Tol-Pal system, which plays a role in outer membrane invagination during cell division and is important for maintaining outer membrane integrity. This chain is Tol-Pal system protein TolB, found in Rickettsia massiliae (strain Mtu5).